A 179-amino-acid chain; its full sequence is Large ribosomal subunit protein uL6 (179 aa).

Belongs to the universal ribosomal protein uL6 family. Part of the 50S ribosomal subunit.

In terms of biological role, this protein binds to the 23S rRNA, and is important in its secondary structure. It is located near the subunit interface in the base of the L7/L12 stalk, and near the tRNA binding site of the peptidyltransferase center. This chain is Large ribosomal subunit protein uL6, found in Halothermothrix orenii (strain H 168 / OCM 544 / DSM 9562).